A 207-amino-acid chain; its full sequence is Protein GrpE (207 aa).

Basic and acidic residues predominate over residues 1–11; sequence MTETDGQKDNN. The disordered stretch occupies residues 1-39; the sequence is MTETDGQKDNNQDTAQAAADPVVSKPYIMPDDPEEGSNE.

This sequence belongs to the GrpE family. In terms of assembly, homodimer.

The protein localises to the cytoplasm. Its function is as follows. Participates actively in the response to hyperosmotic and heat shock by preventing the aggregation of stress-denatured proteins, in association with DnaK and GrpE. It is the nucleotide exchange factor for DnaK and may function as a thermosensor. Unfolded proteins bind initially to DnaJ; upon interaction with the DnaJ-bound protein, DnaK hydrolyzes its bound ATP, resulting in the formation of a stable complex. GrpE releases ADP from DnaK; ATP binding to DnaK triggers the release of the substrate protein, thus completing the reaction cycle. Several rounds of ATP-dependent interactions between DnaJ, DnaK and GrpE are required for fully efficient folding. The chain is Protein GrpE from Rhodopseudomonas palustris (strain TIE-1).